Reading from the N-terminus, the 714-residue chain is Phosphoribosylformylglycinamidine synthase subunit PurL (714 aa).

The active site involves H34. Y37 contributes to the ATP binding site. E78 is a binding site for Mg(2+). Substrate-binding positions include S79–H82 and R101. The active-site Proton acceptor is H80. D102 lines the Mg(2+) pocket. Q226 is a substrate binding site. D254 lines the Mg(2+) pocket. E298–Q300 serves as a coordination point for substrate. Residues D474 and G511 each contribute to the ATP site. N512 provides a ligand contact to Mg(2+). S514 provides a ligand contact to substrate.

The protein belongs to the FGAMS family. As to quaternary structure, monomer. Part of the FGAM synthase complex composed of 1 PurL, 1 PurQ and 2 PurS subunits.

The protein localises to the cytoplasm. It carries out the reaction N(2)-formyl-N(1)-(5-phospho-beta-D-ribosyl)glycinamide + L-glutamine + ATP + H2O = 2-formamido-N(1)-(5-O-phospho-beta-D-ribosyl)acetamidine + L-glutamate + ADP + phosphate + H(+). Its pathway is purine metabolism; IMP biosynthesis via de novo pathway; 5-amino-1-(5-phospho-D-ribosyl)imidazole from N(2)-formyl-N(1)-(5-phospho-D-ribosyl)glycinamide: step 1/2. In terms of biological role, part of the phosphoribosylformylglycinamidine synthase complex involved in the purines biosynthetic pathway. Catalyzes the ATP-dependent conversion of formylglycinamide ribonucleotide (FGAR) and glutamine to yield formylglycinamidine ribonucleotide (FGAM) and glutamate. The FGAM synthase complex is composed of three subunits. PurQ produces an ammonia molecule by converting glutamine to glutamate. PurL transfers the ammonia molecule to FGAR to form FGAM in an ATP-dependent manner. PurS interacts with PurQ and PurL and is thought to assist in the transfer of the ammonia molecule from PurQ to PurL. This is Phosphoribosylformylglycinamidine synthase subunit PurL from Methanothermobacter marburgensis (strain ATCC BAA-927 / DSM 2133 / JCM 14651 / NBRC 100331 / OCM 82 / Marburg) (Methanobacterium thermoautotrophicum).